The primary structure comprises 334 residues: Serine racemase (334 aa).

Glu-13 is a binding site for Mg(2+). 5 residues coordinate ATP: Ser-31, Ser-32, Ile-33, Lys-51, and Thr-52. Catalysis depends on proton acceptor residues Lys-56 and Ser-84. At Lys-56 the chain carries N6-(pyridoxal phosphate)lysine. Residue Asn-86 coordinates pyridoxal 5'-phosphate. Gln-89 contributes to the ATP binding site. Position 113 is an S-nitrosocysteine (Cys-113). Tyr-121 lines the ATP pocket. Asn-154 contributes to the pyridoxal 5'-phosphate binding site. A Mg(2+)-binding site is contributed by Asp-178. Pyridoxal 5'-phosphate-binding residues include Gly-185, Gly-186, Gly-187, Gly-188, and Met-189. The Mg(2+) site is built by Glu-210, Ala-214, Asp-216, and Asn-247. Glu-210, Ala-214, Asp-216, and Asn-247 together coordinate Ca(2+). Glu-210, Ala-214, and Asp-216 together coordinate Mn(2+). An ATP-binding site is contributed by Lys-279. Ser-313 contributes to the pyridoxal 5'-phosphate binding site. Asn-316 serves as a coordination point for ATP.

This sequence belongs to the serine/threonine dehydratase family. In terms of assembly, homodimer. Requires Mg(2+) as cofactor. It depends on Mn(2+) as a cofactor. The cofactor is Ca(2+). Pyridoxal 5'-phosphate is required as a cofactor. S-nitrosylated, leading to decrease the enzyme activity.

The enzyme catalyses L-serine = D-serine. The catalysed reaction is L-serine = pyruvate + NH4(+). It carries out the reaction D-serine = pyruvate + NH4(+). Its function is as follows. Catalyzes the synthesis of D-serine from L-serine. D-serine is a key coagonist with glutamate at NMDA receptors. Has dehydratase activity towards both L-serine and D-serine. This is Serine racemase (SRR) from Bos taurus (Bovine).